An 81-amino-acid polypeptide reads, in one-letter code: ATP synthase subunit c (81 aa).

2 helical membrane passes run 5–25 and 57–77; these read IAAG…IGAG and VGLV…FVFA.

Belongs to the ATPase C chain family. In terms of assembly, F-type ATPases have 2 components, F(1) - the catalytic core - and F(0) - the membrane proton channel. F(1) has five subunits: alpha(3), beta(3), gamma(1), delta(1), epsilon(1). F(0) has three main subunits: a(1), b(2) and c(10-14). The alpha and beta chains form an alternating ring which encloses part of the gamma chain. F(1) is attached to F(0) by a central stalk formed by the gamma and epsilon chains, while a peripheral stalk is formed by the delta and b chains.

The protein localises to the cell membrane. In terms of biological role, f(1)F(0) ATP synthase produces ATP from ADP in the presence of a proton or sodium gradient. F-type ATPases consist of two structural domains, F(1) containing the extramembraneous catalytic core and F(0) containing the membrane proton channel, linked together by a central stalk and a peripheral stalk. During catalysis, ATP synthesis in the catalytic domain of F(1) is coupled via a rotary mechanism of the central stalk subunits to proton translocation. Functionally, key component of the F(0) channel; it plays a direct role in translocation across the membrane. A homomeric c-ring of between 10-14 subunits forms the central stalk rotor element with the F(1) delta and epsilon subunits. The sequence is that of ATP synthase subunit c from Mycobacterium sp. (strain JLS).